A 175-amino-acid polypeptide reads, in one-letter code: Ribosome maturation factor RimM (175 aa).

The region spanning 99–172 is the PRC barrel domain; it reads EGEFHLLDLV…WLRLTPPPGL (74 aa).

This sequence belongs to the RimM family. In terms of assembly, binds ribosomal protein uS19.

It localises to the cytoplasm. Its function is as follows. An accessory protein needed during the final step in the assembly of 30S ribosomal subunit, possibly for assembly of the head region. Essential for efficient processing of 16S rRNA. May be needed both before and after RbfA during the maturation of 16S rRNA. It has affinity for free ribosomal 30S subunits but not for 70S ribosomes. The sequence is that of Ribosome maturation factor RimM from Synechococcus sp. (strain WH7803).